A 118-amino-acid chain; its full sequence is Holo-[acyl-carrier-protein] synthase (118 aa).

Mg(2+) contacts are provided by aspartate 8 and glutamate 57.

Belongs to the P-Pant transferase superfamily. AcpS family. Mg(2+) serves as cofactor.

It is found in the cytoplasm. It carries out the reaction apo-[ACP] + CoA = holo-[ACP] + adenosine 3',5'-bisphosphate + H(+). Functionally, transfers the 4'-phosphopantetheine moiety from coenzyme A to a Ser of acyl-carrier-protein. The sequence is that of Holo-[acyl-carrier-protein] synthase from Acholeplasma laidlawii (strain PG-8A).